Here is a 300-residue protein sequence, read N- to C-terminus: Acetylglutamate kinase (300 aa).

Substrate is bound by residues 73–74 (GG), Arg-95, and Asn-197.

Belongs to the acetylglutamate kinase family. ArgB subfamily.

Its subcellular location is the cytoplasm. The enzyme catalyses N-acetyl-L-glutamate + ATP = N-acetyl-L-glutamyl 5-phosphate + ADP. It functions in the pathway amino-acid biosynthesis; L-arginine biosynthesis; N(2)-acetyl-L-ornithine from L-glutamate: step 2/4. Its function is as follows. Catalyzes the ATP-dependent phosphorylation of N-acetyl-L-glutamate. In Bordetella petrii (strain ATCC BAA-461 / DSM 12804 / CCUG 43448), this protein is Acetylglutamate kinase.